The primary structure comprises 222 residues: Vesicle-associated membrane protein 724 (222 aa).

At Met-1–Leu-197 the chain is on the cytoplasmic side. Positions Phe-10–Met-115 constitute a Longin domain. Positions Lys-131 to Gln-191 constitute a v-SNARE coiled-coil homology domain. A helical; Anchor for type IV membrane protein membrane pass occupies residues Val-198–Phe-218. Residues Asn-219 to Asp-222 lie on the Vesicular side of the membrane.

It belongs to the synaptobrevin family. In terms of tissue distribution, expressed in flowers, leaves, stems and roots.

The protein localises to the cell membrane. It localises to the early endosome membrane. Involved in the targeting and/or fusion of transport vesicles to their target membrane. This chain is Vesicle-associated membrane protein 724, found in Arabidopsis thaliana (Mouse-ear cress).